Consider the following 161-residue polypeptide: Small ribosomal subunit protein uS9 (161 aa).

It belongs to the universal ribosomal protein uS9 family.

The chain is Small ribosomal subunit protein uS9 from Bartonella bacilliformis (strain ATCC 35685 / KC583 / Herrer 020/F12,63).